The sequence spans 317 residues: F-box protein FBW2 (317 aa).

The 48-residue stretch at 7–54 folds into the F-box domain; it reads FRHWDELIPDALGLIFSHLPLQEVLTVVPRVCKAWNRAVTGPYCWQEI.

Part of a SCF (SKP1-cullin-F-box) protein ligase complex. Interacts with CUL1, CUL2 and SPK1B/ASK2.

The protein resides in the nucleus. It functions in the pathway protein modification; protein ubiquitination. Its function is as follows. Component of SCF(ASK-cullin-F-box) E3 ubiquitin ligase complexes, which may mediate the ubiquitination and subsequent proteasomal degradation of target proteins. This chain is F-box protein FBW2 (FBW2), found in Arabidopsis thaliana (Mouse-ear cress).